A 513-amino-acid chain; its full sequence is ATP synthase subunit alpha 2 (513 aa).

Glycine 152–threonine 159 is a binding site for ATP.

Belongs to the ATPase alpha/beta chains family. F-type ATPases have 2 components, CF(1) - the catalytic core - and CF(0) - the membrane proton channel. CF(1) has five subunits: alpha(3), beta(3), gamma(1), delta(1), epsilon(1). CF(0) has three main subunits: a(1), b(2) and c(9-12). The alpha and beta chains form an alternating ring which encloses part of the gamma chain. CF(1) is attached to CF(0) by a central stalk formed by the gamma and epsilon chains, while a peripheral stalk is formed by the delta and b chains.

Its subcellular location is the cell membrane. It carries out the reaction ATP + H2O + 4 H(+)(in) = ADP + phosphate + 5 H(+)(out). In terms of biological role, produces ATP from ADP in the presence of a proton gradient across the membrane. The alpha chain is a regulatory subunit. The chain is ATP synthase subunit alpha 2 from Mycoplasmopsis pulmonis (strain UAB CTIP) (Mycoplasma pulmonis).